Consider the following 192-residue polypeptide: Phosphoheptose isomerase (192 aa).

One can recognise an SIS domain in the interval 37 to 192 (LADSFKGGGK…IQLIEKEMVK (156 aa)). 52–54 (NGG) contributes to the substrate binding site. 2 residues coordinate Zn(2+): histidine 61 and glutamate 65. Substrate is bound by residues glutamate 65, 93–94 (ND), 119–121 (STS), serine 124, and glutamine 172. 2 residues coordinate Zn(2+): glutamine 172 and histidine 180.

It belongs to the SIS family. GmhA subfamily. As to quaternary structure, homotetramer. Zn(2+) serves as cofactor.

It localises to the cytoplasm. It catalyses the reaction 2 D-sedoheptulose 7-phosphate = D-glycero-alpha-D-manno-heptose 7-phosphate + D-glycero-beta-D-manno-heptose 7-phosphate. Its pathway is carbohydrate biosynthesis; D-glycero-D-manno-heptose 7-phosphate biosynthesis; D-glycero-alpha-D-manno-heptose 7-phosphate and D-glycero-beta-D-manno-heptose 7-phosphate from sedoheptulose 7-phosphate: step 1/1. In terms of biological role, catalyzes the isomerization of sedoheptulose 7-phosphate in D-glycero-D-manno-heptose 7-phosphate. The sequence is that of Phosphoheptose isomerase from Escherichia coli O7:K1 (strain IAI39 / ExPEC).